The primary structure comprises 603 residues: Glutamyl-tRNA(Gln) amidotransferase subunit B, mitochondrial (603 aa).

Residues 1–32 (MIRHRLRLALSAAPVTATGRRTRSKTAPRRSL) constitute a mitochondrion transit peptide. The disordered stretch occupies residues 12–59 (AAPVTATGRRTRSKTAPRRSLSTQQTQSSASSSSNNLDGDGRAFVPLR). A compositionally biased stretch (low complexity) spans 31–48 (SLSTQQTQSSASSSSNNL).

This sequence belongs to the GatB/GatE family. GatB subfamily. Subunit of the heterotrimeric GatCAB amidotransferase (AdT) complex, composed of A, B and C subunits.

It localises to the mitochondrion. The enzyme catalyses L-glutamyl-tRNA(Gln) + L-glutamine + ATP + H2O = L-glutaminyl-tRNA(Gln) + L-glutamate + ADP + phosphate + H(+). In terms of biological role, allows the formation of correctly charged Gln-tRNA(Gln) through the transamidation of misacylated Glu-tRNA(Gln) in the mitochondria. The reaction takes place in the presence of glutamine and ATP through an activated gamma-phospho-Glu-tRNA(Gln). The chain is Glutamyl-tRNA(Gln) amidotransferase subunit B, mitochondrial from Arthroderma otae (strain ATCC MYA-4605 / CBS 113480) (Microsporum canis).